Reading from the N-terminus, the 451-residue chain is UDP-N-acetylmuramoylalanine--D-glutamate ligase (451 aa).

120 to 126 (GSNGKTT) provides a ligand contact to ATP.

It belongs to the MurCDEF family.

The protein resides in the cytoplasm. It carries out the reaction UDP-N-acetyl-alpha-D-muramoyl-L-alanine + D-glutamate + ATP = UDP-N-acetyl-alpha-D-muramoyl-L-alanyl-D-glutamate + ADP + phosphate + H(+). It functions in the pathway cell wall biogenesis; peptidoglycan biosynthesis. Cell wall formation. Catalyzes the addition of glutamate to the nucleotide precursor UDP-N-acetylmuramoyl-L-alanine (UMA). This chain is UDP-N-acetylmuramoylalanine--D-glutamate ligase, found in Bacillus velezensis (strain DSM 23117 / BGSC 10A6 / LMG 26770 / FZB42) (Bacillus amyloliquefaciens subsp. plantarum).